An 884-amino-acid chain; its full sequence is Translation initiation factor IF-2 (884 aa).

The segment at 93 to 288 (VNTPEAEQAK…KGKRKPSTLQ (196 aa)) is disordered. Basic and acidic residues predominate over residues 99 to 209 (EQAKAEEQAQ…KMAAENEGKW (111 aa)). Polar residues predominate over residues 216–229 (QTESADYHVTTSQH). The span at 231-246 (RAAEDENDAKVEGDRR) shows a compositional bias: basic and acidic residues. A compositionally biased stretch (basic residues) spans 247–261 (SRTRGGKATKQKKGN). The segment covering 262–275 (KLSESKADREEARA) has biased composition (basic and acidic residues). The tr-type G domain maps to 383–552 (HRAPVVTIMG…LLQAEVLELK (170 aa)). Residues 392-399 (GHVDHGKT) form a G1 region. 392-399 (GHVDHGKT) provides a ligand contact to GTP. A G2 region spans residues 417–421 (GITQH). A G3 region spans residues 438 to 441 (DTPG). GTP-binding positions include 438 to 442 (DTPGH) and 492 to 495 (NKID). A G4 region spans residues 492–495 (NKID). Positions 528–530 (SAK) are G5.

Belongs to the TRAFAC class translation factor GTPase superfamily. Classic translation factor GTPase family. IF-2 subfamily.

It is found in the cytoplasm. Its function is as follows. One of the essential components for the initiation of protein synthesis. Protects formylmethionyl-tRNA from spontaneous hydrolysis and promotes its binding to the 30S ribosomal subunits. Also involved in the hydrolysis of GTP during the formation of the 70S ribosomal complex. This chain is Translation initiation factor IF-2, found in Yersinia pestis bv. Antiqua (strain Angola).